A 219-amino-acid chain; its full sequence is Ran-specific GTPase-activating protein 1 (219 aa).

Composition is skewed to basic and acidic residues over residues 1 to 12 (MAEVERKEEQAK), 33 to 45 (AVGD…EAKK), and 57 to 72 (PRKD…DNID). The interval 1-72 (MAEVERKEEQ…KGGEERDNID (72 aa)) is disordered. The RanBD1 domain maps to 70 to 210 (NIDAAEVVEK…YDLGRAHNEK (141 aa)).

The protein belongs to the RANBP1 family.

The protein resides in the cytoplasm. Its subcellular location is the nucleus. In terms of biological role, important for the export of protein containing nuclear export signal (NES) out of the nucleus. This chain is Ran-specific GTPase-activating protein 1 (YRB1), found in Encephalitozoon cuniculi (strain GB-M1) (Microsporidian parasite).